The following is a 194-amino-acid chain: Putative L,D-transpeptidase YciB (194 aa).

Residues 1–19 form the signal peptide; it reads MKLSLFIIAVLMPVILLSA. Cys-20 is lipidated: N-palmitoyl cysteine. Residue Cys-20 is the site of S-diacylglycerol cysteine attachment. Residues 68-194 form the L,D-TPase catalytic domain; that stretch reads VWIDVNVKEQ…IPEHTKVVIS (127 aa). The active-site Proton donor/acceptor is His-144. Cys-170 acts as the Nucleophile in catalysis.

It belongs to the YkuD family.

The protein resides in the cell membrane. It participates in cell wall biogenesis; peptidoglycan biosynthesis. The polypeptide is Putative L,D-transpeptidase YciB (yciB) (Bacillus subtilis (strain 168)).